A 2971-amino-acid chain; its full sequence is uncharacterized protein (2971 aa).

Residues 929–964 (SANFSNGPEESSLSTRLHIQKKRKAKKQRLETRRQK) form a disordered region. The span at 936 to 945 (PEESSLSTRL) shows a compositional bias: polar residues. Positions 946-955 (HIQKKRKAKK) are enriched in basic residues.

The protein resides in the plastid. It localises to the chloroplast. This is an uncharacterized protein from Chlamydomonas reinhardtii (Chlamydomonas smithii).